A 946-amino-acid polypeptide reads, in one-letter code: Bifunctional glutamine synthetase adenylyltransferase/adenylyl-removing enzyme (946 aa).

The adenylyl removase stretch occupies residues 1–440 (MKPLSSPLQQ…VFNELIGDDE (440 aa)). Residues 449-946 (SEQWRELWQD…ASWQKWLVEE (498 aa)) are adenylyl transferase.

It belongs to the GlnE family. The cofactor is Mg(2+).

It carries out the reaction [glutamine synthetase]-O(4)-(5'-adenylyl)-L-tyrosine + phosphate = [glutamine synthetase]-L-tyrosine + ADP. The catalysed reaction is [glutamine synthetase]-L-tyrosine + ATP = [glutamine synthetase]-O(4)-(5'-adenylyl)-L-tyrosine + diphosphate. Functionally, involved in the regulation of glutamine synthetase GlnA, a key enzyme in the process to assimilate ammonia. When cellular nitrogen levels are high, the C-terminal adenylyl transferase (AT) inactivates GlnA by covalent transfer of an adenylyl group from ATP to specific tyrosine residue of GlnA, thus reducing its activity. Conversely, when nitrogen levels are low, the N-terminal adenylyl removase (AR) activates GlnA by removing the adenylyl group by phosphorolysis, increasing its activity. The regulatory region of GlnE binds the signal transduction protein PII (GlnB) which indicates the nitrogen status of the cell. This Escherichia coli (strain K12 / MC4100 / BW2952) protein is Bifunctional glutamine synthetase adenylyltransferase/adenylyl-removing enzyme.